Reading from the N-terminus, the 79-residue chain is Putative defensin-like protein 137 (79 aa).

The N-terminal stretch at 1–24 (MKKYFQPSFVILIIFTVLVLGVVG) is a signal peptide. 4 cysteine pairs are disulfide-bonded: cysteine 33–cysteine 78, cysteine 42–cysteine 62, cysteine 47–cysteine 72, and cysteine 51–cysteine 74.

The protein belongs to the DEFL family.

It is found in the secreted. The polypeptide is Putative defensin-like protein 137 (LCR14) (Arabidopsis thaliana (Mouse-ear cress)).